We begin with the raw amino-acid sequence, 305 residues long: Glycine--tRNA ligase alpha subunit (305 aa).

This sequence belongs to the class-II aminoacyl-tRNA synthetase family. In terms of assembly, tetramer of two alpha and two beta subunits.

Its subcellular location is the cytoplasm. It catalyses the reaction tRNA(Gly) + glycine + ATP = glycyl-tRNA(Gly) + AMP + diphosphate. This is Glycine--tRNA ligase alpha subunit from Streptococcus mutans serotype c (strain ATCC 700610 / UA159).